Consider the following 355-residue polypeptide: Myricetin 7/4'-O-methyltransferase 2 (355 aa).

Asp221 serves as a coordination point for S-adenosyl-L-methionine. His259 acts as the Proton acceptor in catalysis.

It belongs to the class I-like SAM-binding methyltransferase superfamily. Cation-independent O-methyltransferase family. Homodimer. As to expression, mainly expressed in leaves secreting glandular trichomes types 1 and 4 and, to a lesser extent, in storage trichomes type 6.

The enzyme catalyses quercetin + S-adenosyl-L-methionine = rhamnetin + S-adenosyl-L-homocysteine + H(+). The catalysed reaction is kaempferol + S-adenosyl-L-methionine = kaempferide + S-adenosyl-L-homocysteine + H(+). It catalyses the reaction myricetin + S-adenosyl-L-methionine = 7-O-methylmyricetin + S-adenosyl-L-homocysteine + H(+). It carries out the reaction kaempferide + S-adenosyl-L-methionine = 7,4'-O-dimethylkaempferol + S-adenosyl-L-homocysteine + H(+). The enzyme catalyses isorhamnetin + S-adenosyl-L-methionine = 3',4'-O-dimethylquercetin + S-adenosyl-L-homocysteine + 2 H(+). The catalysed reaction is 3',4',5,7-tetrahydroxy-3-methoxyflavone + S-adenosyl-L-methionine = 3',4',5-trihydroxy-3,7-dimethoxyflavone + S-adenosyl-L-homocysteine + H(+). It catalyses the reaction rhamnetin + S-adenosyl-L-methionine = 7,4'-O-dimethylquercetin + S-adenosyl-L-homocysteine + H(+). It carries out the reaction syringetin + S-adenosyl-L-methionine = 7,3',5'-O-trimethylmyricetin + S-adenosyl-L-homocysteine + H(+). The enzyme catalyses 3',4',5'-O-trimethylmyricetin + S-adenosyl-L-methionine = 7,3',4',5'-O-tetramethylmyricetin + S-adenosyl-L-homocysteine. The protein operates within flavonoid metabolism. In terms of biological role, flavonoid 7/4'-O-methyltransferase involved in the biosynthesis of polymethoxylated flavonoids natural products such as myricetin derivatives, aroma compounds possessing antioxidant properties and exhibiting pharmacological activities such as anti-carcinogen, anti-viral, anti-thrombotic, anti-diabetic, anti-atherosclerotic, and anti-inflammatory effects. Catalyzes S-adenosylmethionine-dependent regioselective 7/4'-O-methylation of flavonoids; active on various hydroxylated flavonoid substrates, including myricetin, quercetin and kaempferol. Mediates the formation of 4'-methyl derivatives from kaempferol, 3'-methyl quercetin (isorhamnetin), 7-methyl quercetin (rhamnetin) and 3'-methyl myricetin, producing 4'-methyl kaempferol (kaempferide), 3',4'-dimethyl quercetin (4'-O-methyl isorhamnetin), 7,4'-dimethyl quercetin (4'-O-methyl rhamnetin, rhamnacene) and 3',4'-dimethyl myricetin, respectively. Triggers the 7-O-methylation of quercetin, myricetin, 4'-methyl kaempferol (kaempferide), 3-methyl quercetin, 3',5'-dimethyl myricetin (syringetin) and 3',4',5'-trimethyl myricetin, thus leading to production of 7-methyl quercetin (rhamnetin), 7-methyl myricetin, 7,4'-dimethyl kaempferol (7-O-methyl kaempferide), 3,7-dimethyl quercetin, 7,3',5'-trimethyl myricetin (7-O-methyl syringetin) and 7,3',4',5'-tetramethyl myricetin, respectively. This chain is Myricetin 7/4'-O-methyltransferase 2, found in Solanum habrochaites (Wild tomato).